Reading from the N-terminus, the 309-residue chain is Ribonuclease Z (309 aa).

Zn(2+)-binding residues include His63, His65, Asp67, His68, His141, Asp212, and His270. Residue Asp67 is the Proton acceptor of the active site.

It belongs to the RNase Z family. In terms of assembly, homodimer. Requires Zn(2+) as cofactor.

It carries out the reaction Endonucleolytic cleavage of RNA, removing extra 3' nucleotides from tRNA precursor, generating 3' termini of tRNAs. A 3'-hydroxy group is left at the tRNA terminus and a 5'-phosphoryl group is left at the trailer molecule.. In terms of biological role, zinc phosphodiesterase, which displays some tRNA 3'-processing endonuclease activity. Probably involved in tRNA maturation, by removing a 3'-trailer from precursor tRNA. The chain is Ribonuclease Z from Limosilactobacillus reuteri (strain DSM 20016) (Lactobacillus reuteri).